A 393-amino-acid polypeptide reads, in one-letter code: Aspartate aminotransferase (393 aa).

The L-aspartate site is built by glycine 38, tryptophan 124, and asparagine 174. At lysine 237 the chain carries N6-(pyridoxal phosphate)lysine.

The protein belongs to the class-I pyridoxal-phosphate-dependent aminotransferase family. Homodimer. Requires pyridoxal 5'-phosphate as cofactor.

Its subcellular location is the cytoplasm. The enzyme catalyses L-aspartate + 2-oxoglutarate = oxaloacetate + L-glutamate. This Geobacillus stearothermophilus (Bacillus stearothermophilus) protein is Aspartate aminotransferase (aspC).